The following is a 330-amino-acid chain: Mas-related G-protein coupled receptor member X2 (330 aa).

The Extracellular segment spans residues 1-33 (MDPTTPAWGNESTTMNGNDQALPLLCGKETLIP). The helical transmembrane segment at 34 to 54 (VFLILFIALVGLVGNGFVLWL) threads the bilayer. Residues 55–63 (LGFCMRRNA) lie on the Cytoplasmic side of the membrane. A helical membrane pass occupies residues 64–84 (FSVYVLSLAGADFLFLCFQLI). Residues 85 to 96 (NCLVYLSNFFCS) lie on the Extracellular side of the membrane. A helical membrane pass occupies residues 97 to 117 (ISIDFPSFFTTVMTCAYLAGL). Residues 118 to 144 (SMLSTISTERCLSVLWPIWYRCRRPRH) are Cytoplasmic-facing. Residues 145–165 (LSAVVCVLLWALSLLLSILEG) form a helical membrane-spanning segment. Over 166-184 (KFCGFFFSDGDSGWCQTFD) the chain is Extracellular. A helical transmembrane segment spans residues 185–205 (FITAAWLIFLFMVLCGSSLAL). The Cytoplasmic portion of the chain corresponds to 206-228 (LVRILCGSRGLPLTRLYLTILLT). Residues 229 to 249 (VLVFLLCGLPFGIQWFLILWI) form a helical membrane-spanning segment. The Extracellular segment spans residues 250–264 (WENSDVLFCHIHPVS). The helical transmembrane segment at 265-285 (VVLSSLNSSANPIIYFFVGTF) threads the bilayer. Topologically, residues 286-330 (RKQWRLQQPILKLALQRALQDTAEVDHSEGCFRQGTPEMSRSSLV) are cytoplasmic.

The protein belongs to the G-protein coupled receptor 1 family. Mas subfamily.

It is found in the cell membrane. Mast cell-specific receptor for basic secretagogues, i.e. cationic amphiphilic drugs, as well as endo- or exogenous peptides, consisting of a basic head group and a hydrophobic core. Recognizes and binds small molecules containing a cyclized tetrahydroisoquinoline (THIQ), such as non-steroidal neuromuscular blocking drugs (NMBDs), including tubocurarine and atracurium. In response to these compounds, mediates pseudo-allergic reactions characterized by histamine release, inflammation and airway contraction. The chain is Mas-related G-protein coupled receptor member X2 (MRGPRX2) from Pongo pygmaeus (Bornean orangutan).